Here is a 136-residue protein sequence, read N- to C-terminus: Large ribosomal subunit protein bL21 (136 aa).

Low complexity predominate over residues 1–21; sequence MSETPSKAKASKPAESKAQAS. Positions 1–25 are disordered; it reads MSETPSKAKASKPAESKAQASDSSG.

It belongs to the bacterial ribosomal protein bL21 family. As to quaternary structure, part of the 50S ribosomal subunit. Contacts protein L20.

Functionally, this protein binds to 23S rRNA in the presence of protein L20. This Synechococcus sp. (strain RCC307) protein is Large ribosomal subunit protein bL21.